The following is a 402-amino-acid chain: CinA-like protein (402 aa).

This sequence belongs to the CinA family.

The protein is CinA-like protein of Escherichia coli O17:K52:H18 (strain UMN026 / ExPEC).